Reading from the N-terminus, the 269-residue chain is MAILQTFSEQTISSARASDIKEPDYSVNSRPEICFFLNGIMEEKSLISLYLARDSHSAILSSILAVDPQQKLLIMDYGINETLNQIALKRGYLRCITSHNQIRIEFDCDNLQRVQFEGRHAFSADIPESLKRLQRRNFYRVTTSITNPAVCTIPLLRAADEAPVVYSLLDISCGGMALIDQPDADTLLKAGTTLEHCRIDLPGDGNLFSSIEASIQIAYVGTVILNNGNTCPRIGCEFINLPEKSRLLIQRYITKLEQQARKLETESGF.

A PilZ domain is found at 134-254 (QRRNFYRVTT…SRLLIQRYIT (121 aa)).

Belongs to the YcgR family. In terms of assembly, monomer. Interacts with the flagellar basal bodies.

The protein localises to the bacterial flagellum basal body. Functionally, acts as a flagellar brake, regulating swimming and swarming in a bis-(3'-5') cyclic diguanylic acid (c-di-GMP)-dependent manner. Binds 1 c-di-GMP dimer per subunit. Increasing levels of c-di-GMP lead to decreased motility. The polypeptide is Flagellar brake protein YcgR (Nitrosomonas eutropha (strain DSM 101675 / C91 / Nm57)).